Consider the following 518-residue polypeptide: T-box transcription factor TBX5 (518 aa).

The interval 1–46 is disordered; it reads MADTDEGFGLARTPLEPDSKDRSCDSKPESALGAPSKSPSSPQAAF. The segment covering 15–28 has biased composition (basic and acidic residues); that stretch reads LEPDSKDRSCDSKP. Over residues 34–45 the composition is skewed to low complexity; sequence APSKSPSSPQAA. Positions 58–238 form a DNA-binding region, T-box; sequence LHERELWLKF…NNPFAKGFRG (181 aa). 2 disordered regions span residues 254–307 and 330–352; these read EYPV…LLPP and ECSS…EEDT. The segment covering 269–301 has biased composition (polar residues); it reads SNHSPFSSETRALSTSSNLGSQYQCENGVSGPS. The residue at position 339 (lysine 339) is an N6-acetyllysine.

As to quaternary structure, monomer. Homodimer (via the T-box); binds DNA as homodimer. Interacts (via the T-box) with NKX2-5 (via the homeobox); this complex binds DNA. Interacts with GATA4. Interacts with KAT2A and KAT2B. Acetylation at Lys-339 by KAT2A and KAT2B promotes nuclear retention.

The protein localises to the nucleus. The protein resides in the cytoplasm. DNA-binding protein that regulates the transcription of several genes and is involved in heart development and limb pattern formation. Binds to the core DNA motif of NPPA promoter. The chain is T-box transcription factor TBX5 (Tbx5) from Mus musculus (Mouse).